The chain runs to 334 residues: Malate dehydrogenase, cytoplasmic (334 aa).

N-acetylserine is present on Ser-2. Residues 11–17 (GAAGQIA) and Asp-42 contribute to the NAD(+) site. Substrate is bound by residues Arg-92 and Arg-98. Asn-105 lines the NAD(+) pocket. The residue at position 110 (Lys-110) is an N6-succinyllysine. Position 112 (Gln-112) interacts with NAD(+). N6-acetyllysine occurs at positions 118 and 121. 129-131 (VGN) contacts NAD(+). Residues Asn-131 and Arg-162 each contribute to the substrate site. Catalysis depends on His-187, which acts as the Proton acceptor. Position 214 is an N6-succinyllysine (Lys-214). Residue Ser-217 is modified to Phosphoserine. At Arg-230 the chain carries Omega-N-methylarginine. Ser-241 carries the post-translational modification Phosphoserine. Lys-298 carries the post-translational modification N6-acetyllysine; alternate. Lys-298 carries the N6-succinyllysine; alternate modification. Ser-309 carries the post-translational modification Phosphoserine. Lys-318 carries the N6-succinyllysine modification. Residues Ser-332 and Ser-333 each carry the phosphoserine modification.

The protein belongs to the LDH/MDH superfamily. MDH type 2 family. Homodimer. In terms of processing, ISGylated. Post-translationally, acetylation at Lys-118 dramatically enhances enzymatic activity and promotes adipogenic differentiation.

The protein localises to the cytoplasm. It is found in the cytosol. The enzyme catalyses (S)-malate + NAD(+) = oxaloacetate + NADH + H(+). It catalyses the reaction (2R)-2-hydroxy-3-(4-hydroxyphenyl)propanoate + NAD(+) = 3-(4-hydroxyphenyl)pyruvate + NADH + H(+). It carries out the reaction (S)-2-hydroxyglutarate + NAD(+) = 2-oxoglutarate + NADH + H(+). Functionally, catalyzes the reduction of aromatic alpha-keto acids in the presence of NADH. Plays essential roles in the malate-aspartate shuttle and the tricarboxylic acid cycle, important in mitochondrial NADH supply for oxidative phosphorylation. Catalyzes the reduction of 2-oxoglutarate to 2-hydroxyglutarate, leading to elevated reactive oxygen species (ROS). In Homo sapiens (Human), this protein is Malate dehydrogenase, cytoplasmic.